Consider the following 679-residue polypeptide: Enzymatic polyprotein (679 aa).

Positions 40 to 130 are protease; sequence LHCFVDTGAS…LYEPFIQFTD (91 aa). Asp-45 is an active-site residue. In terms of domain architecture, Reverse transcriptase spans 272–452; that stretch reads LKVIKPSKSP…KKINFLGLEI (181 aa).

Belongs to the caulimoviridae enzymatic polyprotein family.

The enzyme catalyses DNA(n) + a 2'-deoxyribonucleoside 5'-triphosphate = DNA(n+1) + diphosphate. Its function is as follows. Encodes for at least two polypeptides: protease (PR) and reverse transcriptase (RT). The protease processes the polyprotein in cis. Reverse transcriptase is multifunctional enzyme that converts the viral RNA genome into dsDNA in viral cytoplasmic capsids. This enzyme displays a DNA polymerase activity that can copy either DNA or RNA templates, and a ribonuclease H (RNase H) activity that cleaves the RNA strand of RNA-DNA heteroduplexes in a partially processive 3'- to 5'-endonucleasic mode. Neo-synthesized pregenomic RNA (pgRNA) are encapsidated, and reverse-transcribed inside the nucleocapsid. Partial (+)DNA is synthesized from the (-)DNA template and generates the relaxed circular DNA (RC-DNA) genome. After budding and infection, the RC-DNA migrates in the nucleus, and is converted into a plasmid-like covalently closed circular DNA (cccDNA). The sequence is that of Enzymatic polyprotein from Arabidopsis thaliana (Mouse-ear cress).